The chain runs to 1309 residues: Mediator of RNA polymerase II transcription subunit 33A (1309 aa).

The tract at residues 809 to 829 is disordered; it reads QTLNPVNSGTSSSSGAASEDS. Residues 816-826 are compositionally biased toward low complexity; that stretch reads SGTSSSSGAAS.

The protein belongs to the Mediator complex subunit 33 family. In terms of assembly, component of the Mediator complex.

It is found in the nucleus. In terms of biological role, component of the Mediator complex, a coactivator involved in the regulated transcription of nearly all RNA polymerase II-dependent genes. Mediator functions as a bridge to convey information from gene-specific regulatory proteins to the basal RNA polymerase II transcription machinery. The Mediator complex, having a compact conformation in its free form, is recruited to promoters by direct interactions with regulatory proteins and serves for the assembly of a functional preinitiation complex with RNA polymerase II and the general transcription factors. Involved in the repression of phenylpropanoid biosynthesis. May compete with MED33B for common binding partners or for occupancy in Mediator. This chain is Mediator of RNA polymerase II transcription subunit 33A (MED33A), found in Arabidopsis thaliana (Mouse-ear cress).